The chain runs to 407 residues: L-amino-acid oxidase (407 aa).

Cysteines 10 and 94 form a disulfide. The N-linked (GlcNAc...) asparagine glycan is linked to N93. Residue H144 coordinates substrate. V182 serves as a coordination point for FAD. A disulfide bond links C252 and C333. An N-linked (GlcNAc...) asparagine glycan is attached at N282. Y293 serves as a coordination point for substrate. Residues E378 and 385–390 each bind FAD; that span reads GWIDST. Substrate is bound at residue 385 to 386; it reads GW.

This sequence belongs to the flavin monoamine oxidase family. FIG1 subfamily. Homodimer; non-covalently linked. Requires FAD as cofactor. In terms of tissue distribution, expressed by the venom gland.

It is found in the secreted. The enzyme catalyses an L-alpha-amino acid + O2 + H2O = a 2-oxocarboxylate + H2O2 + NH4(+). It catalyses the reaction L-leucine + O2 + H2O = 4-methyl-2-oxopentanoate + H2O2 + NH4(+). It carries out the reaction L-phenylalanine + O2 + H2O = 3-phenylpyruvate + H2O2 + NH4(+). The catalysed reaction is L-isoleucine + O2 + H2O = (S)-3-methyl-2-oxopentanoate + H2O2 + NH4(+). The enzyme catalyses L-aspartate + O2 + H2O = oxaloacetate + H2O2 + NH4(+). It catalyses the reaction L-lysine + O2 + H2O = 6-amino-2-oxohexanoate + H2O2 + NH4(+). It carries out the reaction L-glutamate + O2 + H2O = H2O2 + 2-oxoglutarate + NH4(+). Its function is as follows. Catalyzes an oxidative deamination of predominantly hydrophobic and aromatic L-amino acids, thus producing hydrogen peroxide that may contribute to the diverse toxic effects of this enzyme. Is highly active on L-Leu followed by L-Phe and L-Ile, moderately active on L-Asp, L-Glu, and L-Lys, and not active on L-Pro, L-Asn, L-Gly, L-Ser and L-Cys. Exhibits diverse biological activities such as antibacterial activity (Minimal inhibitory concentrations (MIC) are 9.0 ug/ml against S.aureus, 144.0 ug/ml against P.aeruginosa and 288.0 ug/ml against E.coli) and inhibition of ADP- and TMVA-induced platelet aggregation. Effects of snake L-amino oxidases on platelets are controversial, since they either induce aggregation or inhibit agonist-induced aggregation. These different effects are probably due to different experimental conditions. Unlike other snake venom L-amino acid oxidases, does not induce hemorrhage. This protein may also induce hemolysis, edema, apoptosis and have antiparasitic activities. The protein is L-amino-acid oxidase of Daboia siamensis (Eastern Russel's viper).